Consider the following 474-residue polypeptide: Variant surface glycoprotein MITAT 1.5 (474 aa).

The signal sequence occupies residues 1–22; it reads MIHSNKVATVVLALISSWPADG. Cystine bridges form between Cys-37–Cys-161 and Cys-144–Cys-214. Asn-74 and Asn-95 each carry an N-linked (GlcNAc...) asparagine glycan. A glycan (N-linked (GlcNAc...) asparagine) is linked at Asn-329. The tract at residues 388–449 is disordered; that stretch reads AKDGEGQKNQ…ETDEPDKEKC (62 aa). 2 stretches are compositionally biased toward basic and acidic residues: residues 414-423 and 435-449; these read TNKEACEKEN and KGKD…KEKC. The GPI-anchor amidated asparagine moiety is linked to residue Asn-451. A propeptide spans 452-474 (removed in mature form); sequence GSFLTSKQFAFSVVSAAFMALLF.

Its subcellular location is the cell membrane. VSG forms a coat on the surface of the parasite. The trypanosome evades the immune response of the host by expressing a series of antigenically distinct VSGs from an estimated 1000 VSG genes. The protein is Variant surface glycoprotein MITAT 1.5 of Trypanosoma brucei brucei.